The following is a 412-amino-acid chain: Argininosuccinate synthase (412 aa).

Residues 15 to 23 (AYSGGLDTS) and A42 each bind ATP. Positions 93 and 98 each coordinate L-citrulline. ATP is bound at residue G123. Residues T125, N129, and D130 each coordinate L-aspartate. N129 lines the L-citrulline pocket. 5 residues coordinate L-citrulline: R133, S185, S194, E270, and Y282.

The protein belongs to the argininosuccinate synthase family. Type 1 subfamily. As to quaternary structure, homotetramer.

Its subcellular location is the cytoplasm. The enzyme catalyses L-citrulline + L-aspartate + ATP = 2-(N(omega)-L-arginino)succinate + AMP + diphosphate + H(+). Its pathway is amino-acid biosynthesis; L-arginine biosynthesis; L-arginine from L-ornithine and carbamoyl phosphate: step 2/3. This chain is Argininosuccinate synthase, found in Psychrobacter arcticus (strain DSM 17307 / VKM B-2377 / 273-4).